The following is a 401-amino-acid chain: Arylacetamide deacetylase-like 2 (401 aa).

The N-terminal stretch at 1-18 (MGLKALCLGLLCVLFVSH) is a signal peptide. Residues 111–113 (HGG) carry the Involved in the stabilization of the negatively charged intermediate by the formation of the oxyanion hole motif. A disulfide bridge connects residues Cys116 and Cys338. Catalysis depends on residues Ser189, Asp341, and His371.

Belongs to the 'GDXG' lipolytic enzyme family.

It is found in the secreted. This chain is Arylacetamide deacetylase-like 2 (AADACL2), found in Homo sapiens (Human).